The chain runs to 762 residues: ABC-type oligopeptide transporter ABCB9 (762 aa).

Transmembrane regions (helical) follow at residues 7 to 27, 47 to 67, 84 to 104, 116 to 136, 181 to 201, 221 to 241, 315 to 335, and 412 to 432; these read VVVT…IYAF, VLDL…ATIG, LVIT…LLLF, FWAL…LWGL, VAFL…ETFL, FTTA…AAGI, VFMF…FPII, and SGLT…HLVI. The region spanning 184 to 467 is the ABC transmembrane type-1 domain; that stretch reads LVAASFFLIV…VGSVYSGLMQ (284 aa). The ABC transporter domain maps to 500 to 736; the sequence is VDFENVTFTY…GGLYAKLVQR (237 aa). Position 535–542 (535–542) interacts with ATP; that stretch reads GPSGSGKS.

Belongs to the ABC transporter superfamily. ABCB family. MHC peptide exporter (TC 3.A.1.209) subfamily. Homodimer. Interacts (via TMD0 region) with LAMP1; this interaction strongly stabilizes ABCB9 and protects ABCB9 against lysosomal degradation. Interacts (via TMD0 region) with LAMP2 (isoform LAMP-2B). Interacts (via TMD0) with YIF1B; this interaction allows (but is not essential) the ER-to-Golgi trafficking and strongly depends on a salt bridge within TMD0. Found in testis, particularly in the Sertoli cells of the seminiferous tubules. Also expressed in kidney, brain, heart, lung, spleen, thymus, intestine and testis. Higher expression detected in brain and testis than in thymus and intestine.

It localises to the lysosome membrane. It carries out the reaction a [oligopeptide](in) + ATP + H2O = a [oligopeptide](out) + ADP + phosphate + H(+). Its function is as follows. ATP-dependent low-affinity peptide transporter which translocates a broad spectrum of peptides from the cytosol to the lysosomal lumen for degradation. Displays a broad peptide length specificity from 6-mer up to at least 59-mer peptides with an optimum of 23-mers. Binds and transports smaller and larger peptides with the same affinity. Favors positively charged, aromatic or hydrophobic residues in the N- and C-terminal positions whereas negatively charged residues as well as asparagine and methionine are not favored. The chain is ABC-type oligopeptide transporter ABCB9 from Rattus norvegicus (Rat).